Here is a 297-residue protein sequence, read N- to C-terminus: Phosphatidylserine decarboxylase proenzyme (297 aa).

Catalysis depends on charge relay system; for autoendoproteolytic cleavage activity residues Asp112, His168, and Ser255. Ser255 (schiff-base intermediate with substrate; via pyruvic acid; for decarboxylase activity) is an active-site residue. At Ser255 the chain carries Pyruvic acid (Ser); by autocatalysis.

It belongs to the phosphatidylserine decarboxylase family. PSD-B subfamily. Prokaryotic type II sub-subfamily. Heterodimer of a large membrane-associated beta subunit and a small pyruvoyl-containing alpha subunit. The cofactor is pyruvate. In terms of processing, is synthesized initially as an inactive proenzyme. Formation of the active enzyme involves a self-maturation process in which the active site pyruvoyl group is generated from an internal serine residue via an autocatalytic post-translational modification. Two non-identical subunits are generated from the proenzyme in this reaction, and the pyruvate is formed at the N-terminus of the alpha chain, which is derived from the carboxyl end of the proenzyme. The autoendoproteolytic cleavage occurs by a canonical serine protease mechanism, in which the side chain hydroxyl group of the serine supplies its oxygen atom to form the C-terminus of the beta chain, while the remainder of the serine residue undergoes an oxidative deamination to produce ammonia and the pyruvoyl prosthetic group on the alpha chain. During this reaction, the Ser that is part of the protease active site of the proenzyme becomes the pyruvoyl prosthetic group, which constitutes an essential element of the active site of the mature decarboxylase.

The protein resides in the cell membrane. The catalysed reaction is a 1,2-diacyl-sn-glycero-3-phospho-L-serine + H(+) = a 1,2-diacyl-sn-glycero-3-phosphoethanolamine + CO2. Its pathway is phospholipid metabolism; phosphatidylethanolamine biosynthesis; phosphatidylethanolamine from CDP-diacylglycerol: step 2/2. Its function is as follows. Catalyzes the formation of phosphatidylethanolamine (PtdEtn) from phosphatidylserine (PtdSer). The chain is Phosphatidylserine decarboxylase proenzyme from Clostridium tetani (strain Massachusetts / E88).